Consider the following 356-residue polypeptide: Sterol-4-alpha-carboxylate 3-dehydrogenase, decarboxylating (356 aa).

Position 1 is an N-acetylmethionine (Met-1). Catalysis depends on Tyr-155, which acts as the Proton acceptor. Lys-159 is an NAD(+) binding site. Residues 281 to 301 traverse the membrane as a helical segment; sequence WLAYYLALLVSLLVMVISPVI. A Prevents secretion from ER motif is present at residues 353–356; the sequence is RKVM.

The protein belongs to the 3-beta-HSD family. In terms of assembly, homodimer.

Its subcellular location is the endoplasmic reticulum membrane. It is found in the lipid droplet. It carries out the reaction a 3beta-hydroxysteroid-4alpha-carboxylate + NADP(+) = a 3-oxosteroid + CO2 + NADPH. The catalysed reaction is a 3beta-hydroxysteroid-4alpha-carboxylate + NAD(+) = a 3-oxosteroid + CO2 + NADH. The enzyme catalyses 4alpha-carboxyzymosterol + NADP(+) = zymosterone + CO2 + NADPH. It catalyses the reaction 4alpha-carboxy-4beta-methyl-5alpha-cholest-8-en-3beta-ol + NADP(+) = 4alpha-methyl-5alpha-cholest-8-en-3-one + CO2 + NADPH. It carries out the reaction 4alpha-carboxy-5alpha-cholest-8-ene-3beta-ol + NADP(+) = 5alpha-cholest-8-en-3-one + CO2 + NADPH. The catalysed reaction is 4beta-methylzymosterol-4alpha-carboxylate + NADP(+) = 3-dehydro-4-methylzymosterol + CO2 + NADPH. The enzyme catalyses 4beta-methylzymosterol-4alpha-carboxylate + NAD(+) = 3-dehydro-4-methylzymosterol + CO2 + NADH. It catalyses the reaction 4alpha-carboxy-5alpha-cholest-8-ene-3beta-ol + NAD(+) = 5alpha-cholest-8-en-3-one + CO2 + NADH. It carries out the reaction 4alpha-carboxy-4beta-methyl-5alpha-cholest-8-en-3beta-ol + NAD(+) = 4alpha-methyl-5alpha-cholest-8-en-3-one + CO2 + NADH. The catalysed reaction is 4alpha-carboxyzymosterol + NAD(+) = zymosterone + CO2 + NADH. Its pathway is steroid biosynthesis; zymosterol biosynthesis; zymosterol from lanosterol: step 4/6. Functionally, catalyzes the NAD(P)(+)-dependent oxidative decarboxylation of the C4 methyl groups of 4-alpha-carboxysterols in post-squalene cholesterol biosynthesis. Also plays a role in the regulation of the endocytic trafficking of EGFR. In Bos taurus (Bovine), this protein is Sterol-4-alpha-carboxylate 3-dehydrogenase, decarboxylating (NSDHL).